Consider the following 459-residue polypeptide: Ribulose bisphosphate carboxylase large chain (459 aa).

Positions 98 and 148 each coordinate substrate. The active-site Proton acceptor is the Lys150. Position 152 (Lys152) interacts with substrate. Residues Lys176, Asp178, and Glu179 each contribute to the Mg(2+) site. N6-carboxylysine is present on Lys176. His268 serves as the catalytic Proton acceptor. The substrate site is built by Arg269, His301, and Ser353.

Belongs to the RuBisCO large chain family. Type I subfamily. As to quaternary structure, heterohexadecamer of 8 large chains and 8 small chains. It depends on Mg(2+) as a cofactor.

Its subcellular location is the plastid. It is found in the chloroplast. It catalyses the reaction 2 (2R)-3-phosphoglycerate + 2 H(+) = D-ribulose 1,5-bisphosphate + CO2 + H2O. The enzyme catalyses D-ribulose 1,5-bisphosphate + O2 = 2-phosphoglycolate + (2R)-3-phosphoglycerate + 2 H(+). In terms of biological role, ruBisCO catalyzes two reactions: the carboxylation of D-ribulose 1,5-bisphosphate, the primary event in carbon dioxide fixation, as well as the oxidative fragmentation of the pentose substrate in the photorespiration process. Both reactions occur simultaneously and in competition at the same active site. This chain is Ribulose bisphosphate carboxylase large chain (rbcL), found in Calyptrosphaera sphaeroidea.